Consider the following 337-residue polypeptide: DNA-directed RNA polymerase subunit alpha (337 aa).

Residues 1–233 (MIQKNWQELI…DQLAIFVNFE (233 aa)) are alpha N-terminal domain (alpha-NTD). The alpha C-terminal domain (alpha-CTD) stretch occupies residues 249–337 (FNPALLKKVD…DLAKRYEDQY (89 aa)).

Belongs to the RNA polymerase alpha chain family. As to quaternary structure, homodimer. The RNAP catalytic core consists of 2 alpha, 1 beta, 1 beta' and 1 omega subunit. When a sigma factor is associated with the core the holoenzyme is formed, which can initiate transcription.

The enzyme catalyses RNA(n) + a ribonucleoside 5'-triphosphate = RNA(n+1) + diphosphate. Its function is as follows. DNA-dependent RNA polymerase catalyzes the transcription of DNA into RNA using the four ribonucleoside triphosphates as substrates. The protein is DNA-directed RNA polymerase subunit alpha of Brucella anthropi (strain ATCC 49188 / DSM 6882 / CCUG 24695 / JCM 21032 / LMG 3331 / NBRC 15819 / NCTC 12168 / Alc 37) (Ochrobactrum anthropi).